Here is a 389-residue protein sequence, read N- to C-terminus: uncharacterized protein (389 aa).

A signal peptide spans 1–29 (MQPSFTPSGGKWLSIAVILLVIGLVVGFA).

Belongs to the bacterial solute-binding protein 1 family. WtpA subfamily.

This is an uncharacterized protein from Thermoplasma volcanium (strain ATCC 51530 / DSM 4299 / JCM 9571 / NBRC 15438 / GSS1).